A 221-amino-acid polypeptide reads, in one-letter code: Orotate phosphoribosyltransferase (221 aa).

5-phospho-alpha-D-ribose 1-diphosphate is bound at residue Lys-26. 34–35 (FF) lines the orotate pocket. Residues 72–73 (YK), Arg-98, Lys-99, Lys-102, His-104, and 123–131 (DDVISAGTS) each bind 5-phospho-alpha-D-ribose 1-diphosphate. Positions 127 and 155 each coordinate orotate.

This sequence belongs to the purine/pyrimidine phosphoribosyltransferase family. PyrE subfamily. As to quaternary structure, homodimer. Requires Mg(2+) as cofactor.

The enzyme catalyses orotidine 5'-phosphate + diphosphate = orotate + 5-phospho-alpha-D-ribose 1-diphosphate. It functions in the pathway pyrimidine metabolism; UMP biosynthesis via de novo pathway; UMP from orotate: step 1/2. Functionally, catalyzes the transfer of a ribosyl phosphate group from 5-phosphoribose 1-diphosphate to orotate, leading to the formation of orotidine monophosphate (OMP). This is Orotate phosphoribosyltransferase from Janthinobacterium sp. (strain Marseille) (Minibacterium massiliensis).